A 327-amino-acid chain; its full sequence is Zinc transport protein ZntB (327 aa).

Topologically, residues 1–273 are cytoplasmic; sequence MEAIKGSDVN…ARRTYTMSLM (273 aa). Residues 274-294 traverse the membrane as a helical segment; that stretch reads AMVFLPSTFLTGLFGVNLGGI. At 295-300 the chain is on the periplasmic side; sequence PGGGWR. The chain crosses the membrane as a helical span at residues 301–321; that stretch reads FGFSLFCILLVVLIGGVTLWL. The Cytoplasmic segment spans residues 322-327; that stretch reads HRSKWL.

It belongs to the CorA metal ion transporter (MIT) (TC 1.A.35) family.

The protein resides in the cell inner membrane. It carries out the reaction Zn(2+)(out) + H(+)(out) = Zn(2+)(in) + H(+)(in). Zinc transporter. Acts as a Zn(2+):proton symporter, which likely mediates zinc ion uptake. The protein is Zinc transport protein ZntB of Salmonella choleraesuis (strain SC-B67).